Consider the following 137-residue polypeptide: MPDLNINEDLINNYQKLTNDIEIFHEISYIDFYNKMNNGKNSLIYLGKPTCPICVKFVPMLHDILAAKNMHIDYFNVDTFFENNSSDKINYINFFQTLNISQLPSLIFTHGDMNYQRLPIYTIKTPINAWITAINDK.

The chain is Protein MesC (mesC) from Leuconostoc mesenteroides.